The sequence spans 355 residues: Phosphate acyltransferase (355 aa).

The protein belongs to the PlsX family. As to quaternary structure, homodimer. Probably interacts with PlsY.

The protein localises to the cytoplasm. The catalysed reaction is a fatty acyl-[ACP] + phosphate = an acyl phosphate + holo-[ACP]. Its pathway is lipid metabolism; phospholipid metabolism. Functionally, catalyzes the reversible formation of acyl-phosphate (acyl-PO(4)) from acyl-[acyl-carrier-protein] (acyl-ACP). This enzyme utilizes acyl-ACP as fatty acyl donor, but not acyl-CoA. In Erythrobacter litoralis (strain HTCC2594), this protein is Phosphate acyltransferase.